The primary structure comprises 259 residues: Cytosolic Fe-S cluster assembly factor Nubp2 homolog (259 aa).

Position 14-21 (14-21 (GKGGVGKS)) interacts with ATP. [4Fe-4S] cluster-binding residues include cysteine 188 and cysteine 191.

Belongs to the Mrp/NBP35 ATP-binding proteins family. NUBP2/CFD1 subfamily. As to quaternary structure, heterotetramer of 2 Nubp1 and 2 Nubp2 chains. [4Fe-4S] cluster is required as a cofactor.

It is found in the cytoplasm. Component of the cytosolic iron-sulfur (Fe/S) protein assembly (CIA) machinery. Required for maturation of extramitochondrial Fe-S proteins. The Nubp1-Nubp2 heterotetramer forms a Fe-S scaffold complex, mediating the de novo assembly of an Fe-S cluster and its transfer to target apoproteins. In Anopheles gambiae (African malaria mosquito), this protein is Cytosolic Fe-S cluster assembly factor Nubp2 homolog.